A 431-amino-acid polypeptide reads, in one-letter code: Na(+)/H(+) antiporter NhaA 1 (431 aa).

Transmembrane regions (helical) follow at residues 17–37 (LSGILLLFVTLFAIIVANSNF), 56–76 (FIISMPLRLWINDGLMALFFL), 98–118 (MFPFVASLGGMIVPASIYIAL), 123–143 (FIGFGIPMGTDTAFAIAMLIL), 154–174 (LFLVALAVIDDLGAIIVVATV), 182–202 (EYFLHAAFVYGLIWLLNYFDV), 209–229 (LFLGIFLWIFIHETGVHATIA), 301–321 (FSAFFIMPIFAFSNAGVLLDF), 329–349 (MIVLGVALGLLVGKPLGIFGF), 373–393 (VGFIAGIGFTMSIFIANLAFI), and 400–420 (AIKIGIFTASFMATVIGMILI).

It belongs to the NhaA Na(+)/H(+) (TC 2.A.33) antiporter family.

Its subcellular location is the cell inner membrane. The catalysed reaction is Na(+)(in) + 2 H(+)(out) = Na(+)(out) + 2 H(+)(in). In terms of biological role, na(+)/H(+) antiporter that extrudes sodium in exchange for external protons. The chain is Na(+)/H(+) antiporter NhaA 1 from Aliarcobacter butzleri (strain RM4018) (Arcobacter butzleri).